Reading from the N-terminus, the 564-residue chain is Alpha-farnesene synthase (564 aa).

Residues aspartate 313, aspartate 317, threonine 464, and glutamate 468 each contribute to the Mg(2+) site. A DDXXD motif motif is present at residues 313 to 317 (DDVYD).

This sequence belongs to the terpene synthase family. The cofactor is Mg(2+).

The enzyme catalyses (2E,6E)-farnesyl diphosphate = (3E,6E)-alpha-farnesene + diphosphate. Functionally, catalyzes the cyclization of farnesyl diphosphate to (E,E)-alpha-farnesene. The sequence is that of Alpha-farnesene synthase (TPS7) from Ricinus communis (Castor bean).